Consider the following 266-residue polypeptide: MMKTLSSGNCTLSVPAKNSYRMVVLGASRVGKSSIVSRFLNGRFEDQYTPTIEDFHRKVYNIRGDMYQLDILDTSGNHPFPAMRRLSILTGDVFILVFSLDNRESFDEVKRLQKQILEVKSCLKNKTKEAAELPMVICGNKNDHGELCRQVPTTEAELLVSGDENCAYFEVSAKKNTNVDEMFYVLFSMAKLPHEMSPALHRKISVQYGDAFHPRPFCMRRVKEMDAYGMVSPFARRPSVNSDLKYIKAKVLREGQARERDKCTIQ.

Glycine 26–serine 33 is a GTP binding site. Positions tyrosine 48–histidine 56 match the Effector region motif. Residues aspartate 73–asparagine 77 and asparagine 140–aspartate 143 contribute to the GTP site. The interaction with GNB1, GNB2 and GNB3 stretch occupies residues methionine 189–alanine 235. At cysteine 263 the chain carries Cysteine methyl ester. A lipid anchor (S-farnesyl cysteine) is attached at cysteine 263. The propeptide at threonine 264–glutamine 266 is removed in mature form.

The protein belongs to the small GTPase superfamily. RasD family. As to quaternary structure, monomer (Potential). Interacts with PIK3CA and UBE2I. Interacts with GNB1, GNB2 and GNB3. Interacts with HTT; interacts with mutant HTT (mHTT) with a much higher affinity than wild type HTT. In terms of processing, farnesylated. Farnesylation is required for membrane targeting. In terms of tissue distribution, pancreatic endocrine cells (islets of Langerhans).

Its subcellular location is the cell membrane. Functionally, GTPase signaling protein that binds to and hydrolyzes GTP. Regulates signaling pathways involving G-proteins-coupled receptor and heterotrimeric proteins such as GNB1, GNB2 and GNB3. May be involved in selected striatal competencies, mainly locomotor activity and motor coordination. The chain is GTP-binding protein Rhes (RASD2) from Homo sapiens (Human).